The chain runs to 494 residues: 4-trimethylaminobutyraldehyde dehydrogenase (494 aa).

Ser-2 carries the post-translational modification N-acetylserine. Residue Lys-30 is modified to N6-acetyllysine; alternate. An N6-succinyllysine; alternate modification is found at Lys-30. N6-succinyllysine is present on Lys-59. NAD(+) contacts are provided by residues Lys-180 and 232-236 (GSVPT). Catalysis depends on Glu-254, which acts as the Proton acceptor. Cys-288 acts as the Nucleophile in catalysis. Lys-298 and Lys-344 each carry N6-acetyllysine. Glu-391 provides a ligand contact to NAD(+).

This sequence belongs to the aldehyde dehydrogenase family. In terms of assembly, homotetramer.

The protein resides in the cytoplasm. It is found in the cytosol. The catalysed reaction is 4-(trimethylamino)butanal + NAD(+) + H2O = 4-(trimethylamino)butanoate + NADH + 2 H(+). It carries out the reaction an aldehyde + NAD(+) + H2O = a carboxylate + NADH + 2 H(+). It catalyses the reaction 4-aminobutanal + NAD(+) + H2O = 4-aminobutanoate + NADH + 2 H(+). The enzyme catalyses formaldehyde + NAD(+) + H2O = formate + NADH + 2 H(+). The catalysed reaction is acetaldehyde + NAD(+) + H2O = acetate + NADH + 2 H(+). It carries out the reaction imidazole-4-acetaldehyde + NAD(+) + H2O = imidazole-4-acetate + NADH + 2 H(+). It catalyses the reaction acrolein + NAD(+) + H2O = acrylate + NADH + 2 H(+). The enzyme catalyses (5-hydroxyindol-3-yl)acetaldehyde + NAD(+) + H2O = (5-hydroxyindol-3-yl)acetate + NADH + 2 H(+). The catalysed reaction is 3,4-dihydroxyphenylacetaldehyde + NAD(+) + H2O = 3,4-dihydroxyphenylacetate + NADH + 2 H(+). It carries out the reaction spermine monoaldehyde + NAD(+) + H2O = N-(2-carboxyethyl)spermidine + NADH + 2 H(+). It catalyses the reaction propanal + NAD(+) + H2O = propanoate + NADH + 2 H(+). The enzyme catalyses butanal + NAD(+) + H2O = butanoate + NADH + 2 H(+). The catalysed reaction is pentanal + NAD(+) + H2O = pentanoate + NADH + 2 H(+). It carries out the reaction hexanal + NAD(+) + H2O = hexanoate + NADH + 2 H(+). It participates in amine and polyamine biosynthesis; carnitine biosynthesis. Functionally, converts gamma-trimethylaminobutyraldehyde into gamma-butyrobetaine with high efficiency (in vitro). Can catalyze the irreversible oxidation of a broad range of aldehydes to the corresponding acids in an NAD-dependent reaction, but with low efficiency. Catalyzes the oxidation of aldehydes arising from biogenic amines and polyamines. This Bos taurus (Bovine) protein is 4-trimethylaminobutyraldehyde dehydrogenase (ALDH9A1).